A 169-amino-acid polypeptide reads, in one-letter code: Fumarase E (169 aa).

Belongs to the MtlR/FumE family.

The enzyme catalyses (S)-malate = fumarate + H2O. Functionally, in vitro catalyzes the addition of water to fumarate, forming malate. Cannot catalyze the reverse reaction. Cannot use the cis-isomer maleate as substrate. The polypeptide is Fumarase E (Escherichia coli (strain K12)).